The following is a 550-amino-acid chain: Keratin, type II cytoskeletal 74 (550 aa).

Residues 1–140 (MSRQLNIKSG…DPEIQKVRAQ (140 aa)) are head. Residues 141 to 176 (EREQIMALNNKFASFIDKVRFLEQQNQVLGTKWELL) form a coil 1A region. Residues 141 to 468 (EREQIMALNN…KLLEGEECWM (328 aa)) enclose the IF rod domain. Residues 177–195 (QQMDLNNCRKNLEPILEGY) form a linker 1 region. The coil 1B stretch occupies residues 196-287 (IGNLRKQLEM…CLYDAEVAQI (92 aa)). Residues 288-311 (QTHTSETSVILSMDNNRYLDLDSI) are linker 12. Positions 312 to 464 (IAEVRAQYED…ATYSKLLEGE (153 aa)) are coil 2. Residues 465–550 (ECWMSGENPS…VSSRARKAAR (86 aa)) are tail. The segment at 491 to 550 (HPGSSASTDLGASTMASTGTSSSSSTQSGQTRAKGARVGDPKDSQDKSTPVSSRARKAAR) is disordered. Residues 502-521 (ASTMASTGTSSSSSTQSGQT) show a composition bias toward low complexity. Residues 527–536 (RVGDPKDSQD) show a composition bias toward basic and acidic residues.

It belongs to the intermediate filament family. As to quaternary structure, heterotetramer of two type I and two type II keratins.

In terms of biological role, has a role in hair formation. Specific component of keratin intermediate filaments in the inner root sheath (IRS) of the hair follicle. The protein is Keratin, type II cytoskeletal 74 (KRT74) of Bos taurus (Bovine).